Reading from the N-terminus, the 232-residue chain is Exosome complex component RRP40 (232 aa).

This sequence belongs to the RRP40 family. As to quaternary structure, component of the RNA exosome complex. Specifically part of the catalytically inactive RNA exosome core complex.

It is found in the cytoplasm. The protein localises to the nucleus. Its subcellular location is the nucleolus. Functionally, non-catalytic component of the RNA exosome complex which has 3'-&gt;5' exoribonuclease activity and participates in a multitude of cellular RNA processing and degradation events. In the nucleus, the RNA exosome complex is involved in proper maturation of stable RNA species such as rRNA, snRNA and snoRNA, in the elimination of RNA processing by-products and non-coding 'pervasive' transcripts such as antisense RNA species, and of mRNAs with processing defects, thereby limiting or excluding their export to the cytoplasm. In the cytoplasm, the RNA exosome complex is involved in general mRNA turnover and specifically degrades inherently unstable mRNAs containing AU-rich elements (AREs) within their 3' untranslated regions, and in RNA surveillance pathways, preventing translation of aberrant mRNAs. The catalytic inactive RNA exosome core complex of 9 subunits is proposed to play a pivotal role in the binding and presentation of RNA for ribonucleolysis, and to serve as a scaffold for the association with catalytic subunits and accessory proteins or complexes. Required generally for normal embryonic and neuronal development. Also plays a critical role in the maintenance of neuronal function in mature flies by controlling the levels of specific mRNAs such as the synaptic regulator Arc1. This chain is Exosome complex component RRP40, found in Drosophila melanogaster (Fruit fly).